A 431-amino-acid polypeptide reads, in one-letter code: MTSYTESSEESGSRMPSEILTSYYDYPTHDQESWWRDTGPLFGRFLKGAGYDVHTQYQYLVFFIKNILPSLGPYPARWRSTITPTGLPIEYSLNFQKNSRPLLRIGFEPLSRFSGTAQDPYNKIATADLLNQLAKVQLHDFDTQLFNHFMNDFDLSRAETEALQKQGGINGKSTVRSQTAFGFDLKGGRVSVKGYAFAGLKNRATGIPVGQLISDSVRKLEPQMHCWDSFSILNDYMEKSDGWNEYSFVSWDCVDIERSRLKLYGVHNAVTWEKVKEMWTLGGRIEEDATIKAGLELLQHMWSLLRIDEGNRDYKGGFAADNGGKTLPIIWNYEINKGSPHPAPKFYFPVHGENDLQVSKSISEFFSHLGWDDHARQYPHLLRQIYPNQNISLTERLQAWISFAYHEHTGPYLSVYYYAAERPPWGSDQVK.

Dimethylallyl diphosphate is bound by residues arginine 104, lysine 193, tyrosine 195, lysine 262, tyrosine 264, tyrosine 347, tyrosine 412, and tyrosine 416.

It belongs to the tryptophan dimethylallyltransferase family. As to quaternary structure, monomer.

It carries out the reaction cyclo(L-tryptophyl-L-alanyl) + dimethylallyl diphosphate = preechinulin + diphosphate. Its pathway is secondary metabolite biosynthesis. It participates in alkaloid biosynthesis. In terms of biological role, reverse prenyltransferase; part of the gene cluster that mediates the biosynthesis of echinulin family alkaloid. The pathway begins with the biosynthesis of the cyclic dipeptide cyclo-L-Trp-L-Ala (cyclo-TA) by the NRPS criC via condensation of L-alanine and L-tryptophan. The prenyltransferase criA then catalyzes the first prenylation step, a reverse prenylation reaction at C2, to yield preechinulin. Preechinulin is the substrate of the cytochrome P450 monooxygenase criE that catalyzes the formation of the double bond between C10 and C11 to produce neoechulin A. The unique prenyltransferase criF functions as a competitive enzyme with criE for preechinulin metabolization and uses preechinulin for effective regiospecific prenylations. Preechinulin is prenylated by criF at C5 or C7. C7-prenylation leads to accumulation of tardioxopiperazine B without further modification by criF. In contrast, the C5-prenylated tardioxopiperazine A can be prenylated again by criF, predominantly at C7 to form echinulin or less frequently at C4 to give variecolorin L. CriF also accepts neoechilunin A to produce varlecolorin G (prenylation at C5) or isoechinulin A (prenylation at C7). CriF further converts isoechinulin A into dehydroechinulin. Moreover, a yet unidentified enzyme can also convert neoechilunin A into neoechilunin B by introducing a double bond between positions C14 and C17 and thus provides a further substrate to criF for C5 and C7 prenylation. This chain is Reverse prenyltransferase criA, found in Aspergillus cristatus (Chinese Fuzhuan brick tea-fermentation fungus).